Reading from the N-terminus, the 77-residue chain is MILFQSNTTTSYAYTNIQPKYAMQLEITILIVIGILILSVILYFIFCRQIPNVHRNSKRRPIYSPMISRPHMALNEI.

Asparagine 7 carries N-linked (GlcNAc...) asparagine; by host glycosylation. A helical membrane pass occupies residues 27–47 (ITILIVIGILILSVILYFIFC).

It belongs to the adenoviridae E3A-1 family.

It is found in the host nucleus membrane. This chain is Early E3 9.0 kDa glycoprotein, found in Human adenovirus B serotype 3 (HAdV-3).